The following is a 180-amino-acid chain: Cytokinin-beta-glucosidase 2 (180 aa).

In terms of biological role, hydrolyzes cytokinin glucosides thus liberating free cytokinins. The protein is Cytokinin-beta-glucosidase 2 (ROLC2) of Linaria vulgaris (Toadflax).